Consider the following 282-residue polypeptide: Lipoyl synthase (282 aa).

[4Fe-4S] cluster-binding residues include Cys37, Cys42, Cys48, Cys63, Cys67, Cys70, and Ser275. One can recognise a Radical SAM core domain in the interval 49–264; the sequence is WSRGTATFMI…RLVGIEKGFR (216 aa).

It belongs to the radical SAM superfamily. Lipoyl synthase family. The cofactor is [4Fe-4S] cluster.

The protein resides in the cytoplasm. The catalysed reaction is [[Fe-S] cluster scaffold protein carrying a second [4Fe-4S](2+) cluster] + N(6)-octanoyl-L-lysyl-[protein] + 2 oxidized [2Fe-2S]-[ferredoxin] + 2 S-adenosyl-L-methionine + 4 H(+) = [[Fe-S] cluster scaffold protein] + N(6)-[(R)-dihydrolipoyl]-L-lysyl-[protein] + 4 Fe(3+) + 2 hydrogen sulfide + 2 5'-deoxyadenosine + 2 L-methionine + 2 reduced [2Fe-2S]-[ferredoxin]. The protein operates within protein modification; protein lipoylation via endogenous pathway; protein N(6)-(lipoyl)lysine from octanoyl-[acyl-carrier-protein]: step 2/2. In terms of biological role, catalyzes the radical-mediated insertion of two sulfur atoms into the C-6 and C-8 positions of the octanoyl moiety bound to the lipoyl domains of lipoate-dependent enzymes, thereby converting the octanoylated domains into lipoylated derivatives. The polypeptide is Lipoyl synthase (Porphyromonas gingivalis (strain ATCC 33277 / DSM 20709 / CIP 103683 / JCM 12257 / NCTC 11834 / 2561)).